A 366-amino-acid polypeptide reads, in one-letter code: 5-hydroxytryptamine receptor 1F (366 aa).

At 1–24 (MDFLNSSDQNLTSEELLNRMPSKI) the chain is on the extracellular side. N-linked (GlcNAc...) asparagine glycans are attached at residues Asn-5 and Asn-10. The helical transmembrane segment at 25 to 49 (LVSLTLSGLALMTTTINCLVITAII) threads the bilayer. The Cytoplasmic portion of the chain corresponds to 50–59 (VTRKLHHPAN). The helical transmembrane segment at 60–81 (YLICSLAVTDFLVAVLVMPFSI) threads the bilayer. At 82–96 (VYIVRESWIMGQGLC) the chain is on the extracellular side. Cys-96 and Cys-172 are disulfide-bonded. A helical membrane pass occupies residues 97–119 (DLWLSVDIICCTCSILHLSAIAL). Positions 103 and 107 each coordinate serotonin. Positions 120-122 (DRY) match the DRY motif; important for ligand-induced conformation changes motif. Residues 120–139 (DRYRAITDAVEYARKRTPRH) lie on the Cytoplasmic side of the membrane. The helical transmembrane segment at 140-159 (AGITITTVWVISVFISVPPL) threads the bilayer. At 160-178 (FWRHQGNSRDDQCIIKHDH) the chain is on the extracellular side. Residues 179 to 202 (IVSTIYSTFGAFYIPLVLILILYY) traverse the membrane as a helical segment. Topologically, residues 203–291 (KIYRAARTLY…KISGTRERKA (89 aa)) are cytoplasmic. A helical transmembrane segment spans residues 292 to 315 (ATTLGLILGAFVICWLPFFVKELV). At 316–327 (VNICEKCKISEE) the chain is on the extracellular side. Residues 328 to 350 (MSNFLAWLGYLNSLINPLIYTIF) traverse the membrane as a helical segment. Positions 343–347 (NPLIY) match the NPxxY motif; important for ligand-induced conformation changes and signaling motif. Topologically, residues 351–366 (NEDFKKAFQKLVRCRN) are cytoplasmic.

Belongs to the G-protein coupled receptor 1 family.

It is found in the cell membrane. Functionally, G-protein coupled receptor for 5-hydroxytryptamine (serotonin). Also functions as a receptor for various alkaloids and psychoactive substances. Ligand binding causes a conformation change that triggers signaling via guanine nucleotide-binding proteins (G proteins) and modulates the activity of downstream effectors, such as adenylate cyclase. HTR1F is coupled to G(i)/G(o) G alpha proteins and mediates inhibitory neurotransmission by inhibiting adenylate cyclase activity. In Rattus norvegicus (Rat), this protein is 5-hydroxytryptamine receptor 1F (Htr1f).